The chain runs to 158 residues: SsrA-binding protein (158 aa).

The segment at 135-158 is disordered; the sequence is DKRKTLKDRDWERDKQRGFKKDLD. The segment covering 141 to 158 has biased composition (basic and acidic residues); that stretch reads KDRDWERDKQRGFKKDLD.

Belongs to the SmpB family.

It localises to the cytoplasm. Required for rescue of stalled ribosomes mediated by trans-translation. Binds to transfer-messenger RNA (tmRNA), required for stable association of tmRNA with ribosomes. tmRNA and SmpB together mimic tRNA shape, replacing the anticodon stem-loop with SmpB. tmRNA is encoded by the ssrA gene; the 2 termini fold to resemble tRNA(Ala) and it encodes a 'tag peptide', a short internal open reading frame. During trans-translation Ala-aminoacylated tmRNA acts like a tRNA, entering the A-site of stalled ribosomes, displacing the stalled mRNA. The ribosome then switches to translate the ORF on the tmRNA; the nascent peptide is terminated with the 'tag peptide' encoded by the tmRNA and targeted for degradation. The ribosome is freed to recommence translation, which seems to be the essential function of trans-translation. The polypeptide is SsrA-binding protein (Psychrobacter arcticus (strain DSM 17307 / VKM B-2377 / 273-4)).